The sequence spans 564 residues: Septation ring formation regulator EzrA (564 aa).

Residues methionine 1 to valine 2 lie on the Extracellular side of the membrane. A helical transmembrane segment spans residues phenylalanine 3–leucine 21. At arginine 22–arginine 564 the chain is on the cytoplasmic side. Coiled-coil stretches lie at residues alanine 101 to valine 140, phenylalanine 168 to phenylalanine 215, glycine 251 to asparagine 436, and aspartate 468 to leucine 537.

It belongs to the EzrA family.

Its subcellular location is the cell membrane. In terms of biological role, negative regulator of FtsZ ring formation; modulates the frequency and position of FtsZ ring formation. Inhibits FtsZ ring formation at polar sites. Interacts either with FtsZ or with one of its binding partners to promote depolymerization. The protein is Septation ring formation regulator EzrA of Oceanobacillus iheyensis (strain DSM 14371 / CIP 107618 / JCM 11309 / KCTC 3954 / HTE831).